Here is a 100-residue protein sequence, read N- to C-terminus: Small ribosomal subunit protein uS14c (100 aa).

This sequence belongs to the universal ribosomal protein uS14 family. In terms of assembly, part of the 30S ribosomal subunit.

Its subcellular location is the plastid. It localises to the chloroplast. Its function is as follows. Binds 16S rRNA, required for the assembly of 30S particles. The sequence is that of Small ribosomal subunit protein uS14c from Fagopyrum esculentum subsp. ancestrale (Wild buckwheat).